Consider the following 216-residue polypeptide: PEP-dependent dihydroxyacetone kinase 2, ADP-binding subunit DhaL (216 aa).

One can recognise a DhaL domain in the interval 9–210; that stretch reads AFFGHVLQDM…SWMLMNVILE (202 aa). Asp-33, Asp-38, and Asp-40 together coordinate Mg(2+). ADP contacts are provided by residues 41–44, 84–85, Gly-126, Met-135, Arg-182, and 195–197; these read HGIN, AS, and DPG.

Homodimer. The dihydroxyacetone kinase complex is composed of a homodimer of DhaM, a homodimer of DhaK and the subunit DhaL. Mg(2+) is required as a cofactor.

It localises to the cytoplasm. It catalyses the reaction dihydroxyacetone + phosphoenolpyruvate = dihydroxyacetone phosphate + pyruvate. The protein operates within polyol metabolism; glycerol degradation. ADP-binding subunit of the dihydroxyacetone kinase, which is responsible for the phosphoenolpyruvate (PEP)-dependent phosphorylation of dihydroxyacetone. DhaL-ADP is converted to DhaL-ATP via a phosphoryl group transfer from DhaM and transmits it to dihydroxyacetone binds to DhaK. The polypeptide is PEP-dependent dihydroxyacetone kinase 2, ADP-binding subunit DhaL (Listeria innocua serovar 6a (strain ATCC BAA-680 / CLIP 11262)).